We begin with the raw amino-acid sequence, 328 residues long: Pleckstrin homology domain protein OPY1 (328 aa).

The tract at residues 19-52 is disordered; that stretch reads NLIKKPSTSQNKTPTAQSSSGNNGAADGAPQGYH. Residues 24 to 41 show a composition bias toward polar residues; that stretch reads PSTSQNKTPTAQSSSGNN. Residues 213 to 328 are required for targeting to the cell membrane; it reads AEHQVCSGIL…IRKKLKAENI (116 aa). The region spanning 215–318 is the PH domain; it reads HQVCSGILYT…WIINFKSGIL (104 aa).

Interacts with MSS4 (via N-terminus); to negatively regulate MSS4 kinase activity.

It is found in the cell membrane. The protein localises to the cytoplasm. Binds phosphatidylinositol 4,5-bisphosphate (PtdIns(4,5)P2/PIP2) at the cell membrane. Negatively regulates the activity of phosphatidylinositol 4-phosphate 5-kinase MSS4. This Saccharomyces cerevisiae (strain ATCC 204508 / S288c) (Baker's yeast) protein is Pleckstrin homology domain protein OPY1 (OPY1).